A 219-amino-acid polypeptide reads, in one-letter code: Protein GrpE (219 aa).

Disordered regions lie at residues 1-32 (MSTT…LDAT) and 59-87 (FDGV…AERT).

Belongs to the GrpE family. As to quaternary structure, homodimer.

Its subcellular location is the cytoplasm. Functionally, participates actively in the response to hyperosmotic and heat shock by preventing the aggregation of stress-denatured proteins, in association with DnaK and GrpE. It is the nucleotide exchange factor for DnaK and may function as a thermosensor. Unfolded proteins bind initially to DnaJ; upon interaction with the DnaJ-bound protein, DnaK hydrolyzes its bound ATP, resulting in the formation of a stable complex. GrpE releases ADP from DnaK; ATP binding to DnaK triggers the release of the substrate protein, thus completing the reaction cycle. Several rounds of ATP-dependent interactions between DnaJ, DnaK and GrpE are required for fully efficient folding. This is Protein GrpE from Corynebacterium diphtheriae (strain ATCC 700971 / NCTC 13129 / Biotype gravis).